A 501-amino-acid polypeptide reads, in one-letter code: Glycosyltransferase family 92 protein F13G3.3 (501 aa).

The chain crosses the membrane as a helical span at residues 10–30; sequence LSVVLLFSFLFFVTAVLLQFI. One can recognise a GT92 domain in the interval 151–439; it reads KPVVMCISPL…ISDCYKQSYY (289 aa).

It belongs to the glycosyltransferase 92 family.

The protein localises to the membrane. The polypeptide is Glycosyltransferase family 92 protein F13G3.3 (Caenorhabditis elegans).